The sequence spans 518 residues: D-aminopeptidase (518 aa).

The active-site Nucleophile is the S62. K65 serves as the catalytic Proton donor/acceptor. Positions 477–487 (QRSMDAPSPGE) are important for specificity. Residue D481 coordinates substrate.

It belongs to the peptidase S12 family. In terms of assembly, homodimer.

It carries out the reaction Release of an N-terminal D-amino acid from a peptide, Xaa-|-Yaa-, in which Xaa is preferably D-Ala, D-Ser or D-Thr. D-amino acid amides and methyl esters also are hydrolyzed, as is glycine amide.. Its activity is regulated as follows. Inhibited by beta-lactam compounds such as 6-aminopenicillic acid, 7-aminocephalosporanic acid, benzylpenicillin and ampicillin. Inhibited by p-chloromercuribenzoate. Its function is as follows. Hydrolyzes N-terminal residues in D-amino acid-containing peptides. This chain is D-aminopeptidase, found in Brucella ovis (strain ATCC 25840 / 63/290 / NCTC 10512).